The following is a 126-amino-acid chain: Holo-[acyl-carrier-protein] synthase (126 aa).

Asp-9 and Glu-58 together coordinate Mg(2+).

This sequence belongs to the P-Pant transferase superfamily. AcpS family. The cofactor is Mg(2+).

The protein resides in the cytoplasm. The catalysed reaction is apo-[ACP] + CoA = holo-[ACP] + adenosine 3',5'-bisphosphate + H(+). In terms of biological role, transfers the 4'-phosphopantetheine moiety from coenzyme A to a Ser of acyl-carrier-protein. The chain is Holo-[acyl-carrier-protein] synthase from Citrobacter koseri (strain ATCC BAA-895 / CDC 4225-83 / SGSC4696).